The sequence spans 79 residues: Small ribosomal subunit protein bS21 (79 aa).

Basic residues-rich tracts occupy residues 47–59 (RKQAAAVKRHLKK) and 69–79 (GVGHRRKKSTT). The disordered stretch occupies residues 47 to 79 (RKQAAAVKRHLKKISRDVSSRRGVGHRRKKSTT).

Belongs to the bacterial ribosomal protein bS21 family.

In Legionella pneumophila (strain Paris), this protein is Small ribosomal subunit protein bS21.